The chain runs to 285 residues: ATP synthase gamma chain (285 aa).

It belongs to the ATPase gamma chain family. As to quaternary structure, F-type ATPases have 2 components, CF(1) - the catalytic core - and CF(0) - the membrane proton channel. CF(1) has five subunits: alpha(3), beta(3), gamma(1), delta(1), epsilon(1). CF(0) has three main subunits: a, b and c.

It is found in the cell membrane. In terms of biological role, produces ATP from ADP in the presence of a proton gradient across the membrane. The gamma chain is believed to be important in regulating ATPase activity and the flow of protons through the CF(0) complex. In Dehalococcoides mccartyi (strain CBDB1), this protein is ATP synthase gamma chain.